The following is a 207-amino-acid chain: Putative 3-methyladenine DNA glycosylase (207 aa).

The protein belongs to the DNA glycosylase MPG family.

This chain is Putative 3-methyladenine DNA glycosylase, found in Listeria monocytogenes serotype 4b (strain CLIP80459).